Here is a 109-residue protein sequence, read N- to C-terminus: MFTKGGLGNLMKQAQQMQEKMAKVQEEIAKMEVTGEAGAGLVKVTINGAHNCRRVEVDPSLLKDDKDMLEDLAAAAFNDATRRISEVQKKKMSAISTGMQLPTGFNIPI.

The protein belongs to the YbaB/EbfC family. In terms of assembly, homodimer.

The protein resides in the cytoplasm. It is found in the nucleoid. In terms of biological role, binds to DNA and alters its conformation. May be involved in regulation of gene expression, nucleoid organization and DNA protection. In Buchnera aphidicola subsp. Schizaphis graminum (strain Sg), this protein is Nucleoid-associated protein BUsg_467.